A 359-amino-acid chain; its full sequence is tRNA-specific 2-thiouridylase MnmA (359 aa).

ATP contacts are provided by residues G9–S16 and M35. Positions N95–D97 are interaction with target base in tRNA. Catalysis depends on C100, which acts as the Nucleophile. C100 and C197 are oxidised to a cystine. An ATP-binding site is contributed by G124. Residues K147–Q149 are interaction with tRNA. The active-site Cysteine persulfide intermediate is C197. An interaction with tRNA region spans residues R309–Y310.

This sequence belongs to the MnmA/TRMU family.

It localises to the cytoplasm. The enzyme catalyses S-sulfanyl-L-cysteinyl-[protein] + uridine(34) in tRNA + AH2 + ATP = 2-thiouridine(34) in tRNA + L-cysteinyl-[protein] + A + AMP + diphosphate + H(+). In terms of biological role, catalyzes the 2-thiolation of uridine at the wobble position (U34) of tRNA, leading to the formation of s(2)U34. In Francisella tularensis subsp. novicida (strain U112), this protein is tRNA-specific 2-thiouridylase MnmA.